The following is a 171-amino-acid chain: Putative pre-16S rRNA nuclease (171 aa).

This sequence belongs to the YqgF nuclease family.

The protein localises to the cytoplasm. Could be a nuclease involved in processing of the 5'-end of pre-16S rRNA. This is Putative pre-16S rRNA nuclease from Corynebacterium diphtheriae (strain ATCC 700971 / NCTC 13129 / Biotype gravis).